We begin with the raw amino-acid sequence, 205 residues long: Golgi apparatus membrane protein TVP23 homolog B (205 aa).

An N-acetylmethionine modification is found at methionine 1. The span at 1 to 21 (MLSQDSNDDTEDVSLFDAEEE) shows a compositional bias: acidic residues. A disordered region spans residues 1-27 (MLSQDSNDDTEDVSLFDAEEETTNRPR). The next 4 helical transmembrane spans lie at 34-53 (PVAS…VYLL), 54-72 (CELL…ILLL), 126-146 (IFWL…FSAL), and 152-172 (KWLA…YGYI).

This sequence belongs to the TVP23 family.

The protein resides in the membrane. In Mus musculus (Mouse), this protein is Golgi apparatus membrane protein TVP23 homolog B (Tvp23b).